We begin with the raw amino-acid sequence, 220 residues long: Guanylate kinase (220 aa).

Residues 16 to 195 (GLMFVLSSPS…AFESVRSILR (180 aa)) enclose the Guanylate kinase-like domain. 23–30 (SPSGAGKT) provides a ligand contact to ATP.

This sequence belongs to the guanylate kinase family.

It localises to the cytoplasm. The catalysed reaction is GMP + ATP = GDP + ADP. In terms of biological role, essential for recycling GMP and indirectly, cGMP. This is Guanylate kinase from Rhodopseudomonas palustris (strain ATCC BAA-98 / CGA009).